The sequence spans 62 residues: Large ribosomal subunit protein bL28 (62 aa).

The protein belongs to the bacterial ribosomal protein bL28 family.

This is Large ribosomal subunit protein bL28 from Aliarcobacter butzleri (strain RM4018) (Arcobacter butzleri).